The primary structure comprises 128 residues: MKVHLLKSKIHNAIVTSGDLEYEGSITIDCELLEKADMIPNEKVLVVNNNNGERFETYIINGVRGSRVIQLNGAAARCALPGDEIIIMTFCEIDAEESREFKPMVLIVDRNNNPKRRHRIGEEDEQLD.

Residue S25 is the Schiff-base intermediate with substrate; via pyruvic acid of the active site. Residue S25 is modified to Pyruvic acid (Ser). T57 provides a ligand contact to substrate. The active-site Proton donor is Y58. 73-75 (GAA) serves as a coordination point for substrate.

The protein belongs to the PanD family. As to quaternary structure, heterooctamer of four alpha and four beta subunits. The cofactor is pyruvate. Is synthesized initially as an inactive proenzyme, which is activated by self-cleavage at a specific serine bond to produce a beta-subunit with a hydroxyl group at its C-terminus and an alpha-subunit with a pyruvoyl group at its N-terminus.

The protein localises to the cytoplasm. It carries out the reaction L-aspartate + H(+) = beta-alanine + CO2. It functions in the pathway cofactor biosynthesis; (R)-pantothenate biosynthesis; beta-alanine from L-aspartate: step 1/1. Catalyzes the pyruvoyl-dependent decarboxylation of aspartate to produce beta-alanine. The polypeptide is Aspartate 1-decarboxylase (Chlorobium luteolum (strain DSM 273 / BCRC 81028 / 2530) (Pelodictyon luteolum)).